Here is a 599-residue protein sequence, read N- to C-terminus: Endoribonuclease ZC3H12A (599 aa).

The disordered stretch occupies residues 1–40 (MSGPCGEKPVLEASPTMSLWEFEDSHSRQGTPRPGQELAA). The ubiquitin association domain stretch occupies residues 42-87 (EASALELQMKVDFFRKLGYSSTEIHSVLQKLGVQADTNTVLGELVK). The interval 81 to 150 (VLGELVKHGT…DGSNVAMSHG (70 aa)) is necessary for interaction with TANK. Residues 90 to 133 (TATERERQTSPDPCPQLPLVPRGGGTPKAPNLEPPLPEEEKEGS) form a disordered region. A Phosphoserine modification is found at S99. The segment at 112–297 (GGGTPKAPNL…LDNFLRKKPL (186 aa)) is RNase. Residues 135 to 290 (LRPVVIDGSN…LGRHGPSLDN (156 aa)) enclose the RNase NYN domain. An RNA binding region spans residues 214–220 (RRVGGKR). D226 is a binding site for Mg(2+). The segment at 301-324 (HRKQPCPYGRKCTYGIKCRFFHPE) adopts a C3H1-type zinc-finger fold. The segment at 301-457 (HRKQPCPYGR…SELWGVRGGG (157 aa)) is necessary for interaction with ZC3H12D. A disordered region spans residues 343-420 (LSPPRAPSKD…SGSSFGPTDW (78 aa)). Phosphoserine is present on S344. The span at 358-375 (PSPSSQSSSLLTESEQCS) shows a compositional bias: low complexity. Residues 386 to 399 (SPGSRQEGLTQTYA) show a composition bias toward polar residues. Phosphoserine is present on residues S438 and S442. Residues 522–546 (PPPTSVLQEPPVQSPGAGRSPWGRA) form a disordered region.

Belongs to the ZC3H12 family. As to quaternary structure, oligomer. Found in a deubiquitination complex with TANK, USP10 and ZC3H12A; this complex inhibits genotoxic stress- or interleukin-1-beta-mediated NF-kappaB activation by promoting IKBKG or TRAF6 deubiquitination. Interacts with IKBKG; this interaction increases in response to DNA damage. Interacts with TANK; this interaction increases in response to DNA damage and serves as a bridge to anchor both TANK and USP10 into a deubiquitinating complex. Interacts with TRAF6; this interaction increases in response to DNA damage and is stimulated by TANK. Interacts with USP10; this interaction increases in response to DNA damage and serves as a bridge to anchor both TANK and USP10 into a deubiquitinating complex. Interacts with ZC3H12D. Interacts with TNRC6A. Interacts with IKBKB/IKKB. Interacts with IKBKB/IKKB. Interacts with BTRC; the interaction occurs when ZC3H12A is phosphorylated in a IKBKB/IKKB-dependent manner. Interacts with IRAK1; this interaction increases the interaction between ZC3H12A and IKBKB/IKKB. Interacts with UPF1; this interaction occurs in a mRNA translationally active- and termination-dependent manner and is essential for ZC3H12A-mediated degradation of target mRNAs. Associates with ribosomes. Interacts with ubiquitin. In terms of assembly, (Microbial infection) Oligomerization is necessary for antiviral activity. It depends on Mg(2+) as a cofactor. In terms of processing, phosphorylated by IRAK1; phosphorylation is necessary for subsequent phosphorylation by the I-kappa-B-kinase (IKK) complex. Phosphorylated by I-kappa-B-kinase (IKK) subunits IKBKB/IKKB and CHUK/IKKA at Ser-438 and Ser-442; these phosphorylations promote ubiquitin proteasome-mediated degradation of ZC3H12A and hence facilitates rapid and robust production of IL-6 mRNA in response to toll-like receptor (TLR) or IL-1 receptor stimuli. (Microbial infection) Rapidly degraded in activated T-cells in response to phorbol 13-acetate 12-myristate (PMA) during HIV-1 viral infection. Post-translationally, ubiquitinated; ubiquitination is induced in response to interleukin IL1 receptor stimuli in a IKBKB/IKKB and IRAK1-dependent manner, leading to proteasome-mediated degradation. In terms of processing, proteolytically cleaved between Arg-111 and Arg-214 by MALT1 in activated T-cells; cleavage at Arg-111 is critical for promoting ZC3H12A degradation in response to T-cell receptor (TCR) stimulation, and hence is necessary for prolonging the stability of a set of mRNAs controlling T-cell activation and Th17 cell differentiation. As to expression, expressed in heart, placenta, spleen, kidney, liver and lung. Expressed in leukocytes. Expressed in monocyte.

It localises to the nucleus. It is found in the cytoplasm. The protein localises to the P-body. Its subcellular location is the rough endoplasmic reticulum membrane. The protein resides in the cytoplasmic granule. In terms of biological role, endoribonuclease involved in various biological functions such as cellular inflammatory response and immune homeostasis, glial differentiation of neuroprogenitor cells, cell death of cardiomyocytes, adipogenesis and angiogenesis. Functions as an endoribonuclease involved in mRNA decay. Modulates the inflammatory response by promoting the degradation of a set of translationally active cytokine-induced inflammation-related mRNAs, such as IL6 and IL12B, during the early phase of inflammation. Prevents aberrant T-cell-mediated immune reaction by degradation of multiple mRNAs controlling T-cell activation, such as those encoding cytokines (IL6 and IL2), cell surface receptors (ICOS, TNFRSF4 and TNFR2) and transcription factor (REL). Inhibits cooperatively with ZC3H12A the differentiation of helper T cells Th17 in lungs. They repress target mRNA encoding the Th17 cell-promoting factors IL6, ICOS, REL, IRF4, NFKBID and NFKBIZ. The cooperation requires RNA-binding by RC3H1 and the nuclease activity of ZC3H12A. Together with RC3H1, destabilizes TNFRSF4/OX40 mRNA by binding to the conserved stem loop structure in its 3'UTR. Self regulates by destabilizing its own mRNA. Cleaves mRNA harboring a stem-loop (SL), often located in their 3'-UTRs, during the early phase of inflammation in a helicase UPF1-dependent manner. Plays a role in the inhibition of microRNAs (miRNAs) biogenesis. Cleaves the terminal loop of a set of precursor miRNAs (pre-miRNAs) important for the regulation of the inflammatory response leading to their degradation, and thus preventing the biosynthesis of mature miRNAs. Also plays a role in promoting angiogenesis in response to inflammatory cytokines by inhibiting the production of antiangiogenic microRNAs via its anti-dicer RNase activity. Affects the overall ubiquitination of cellular proteins. Positively regulates deubiquitinase activity promoting the cleavage at 'Lys-48'- and 'Lys-63'-linked polyubiquitin chains on TNF receptor-associated factors (TRAFs), preventing JNK and NF-kappa-B signaling pathway activation, and hence negatively regulating macrophage-mediated inflammatory response and immune homeostasis. Also induces deubiquitination of the transcription factor HIF1A, probably leading to its stabilization and nuclear import, thereby positively regulating the expression of proangiogenic HIF1A-targeted genes. Involved in a TANK-dependent negative feedback response to attenuate NF-kappaB activation through the deubiquitination of IKBKG or TRAF6 in response to interleukin-1-beta (IL1B) stimulation or upon DNA damage. Prevents stress granule (SGs) formation and promotes macrophage apoptosis under stress conditions, including arsenite-induced oxidative stress, heat shock and energy deprivation. Plays a role in the regulation of macrophage polarization; promotes IL4-induced polarization of macrophages M1 into anti-inflammatory M2 state. May also act as a transcription factor that regulates the expression of multiple genes involved in inflammatory response, angiogenesis, adipogenesis and apoptosis. Functions as a positive regulator of glial differentiation of neuroprogenitor cells through an amyloid precursor protein (APP)-dependent signaling pathway. Attenuates septic myocardial contractile dysfunction in response to lipopolysaccharide (LPS) by reducing I-kappa-B-kinase (IKK)-mediated NF-kappa-B activation, and hence myocardial pro-inflammatory cytokine production. (Microbial infection) Binds to Japanese encephalitis virus (JEV) and Dengue virus (DEN) RNAs. Its function is as follows. (Microbial infection) Exhibits antiviral activity against HIV-1 in lymphocytes by decreasing the abundance of HIV-1 viral RNA species. The sequence is that of Endoribonuclease ZC3H12A from Homo sapiens (Human).